The chain runs to 37 residues: Large ribosomal subunit protein bL36c (37 aa).

It belongs to the bacterial ribosomal protein bL36 family.

The protein localises to the plastid. Its subcellular location is the chloroplast. This chain is Large ribosomal subunit protein bL36c, found in Tetradesmus obliquus (Green alga).